Reading from the N-terminus, the 393-residue chain is NAD(P)H-quinone oxidoreductase subunit H, chloroplastic (393 aa).

Belongs to the complex I 49 kDa subunit family. In terms of assembly, NDH is composed of at least 16 different subunits, 5 of which are encoded in the nucleus.

The protein localises to the plastid. It is found in the chloroplast thylakoid membrane. The catalysed reaction is a plastoquinone + NADH + (n+1) H(+)(in) = a plastoquinol + NAD(+) + n H(+)(out). It carries out the reaction a plastoquinone + NADPH + (n+1) H(+)(in) = a plastoquinol + NADP(+) + n H(+)(out). Its function is as follows. NDH shuttles electrons from NAD(P)H:plastoquinone, via FMN and iron-sulfur (Fe-S) centers, to quinones in the photosynthetic chain and possibly in a chloroplast respiratory chain. The immediate electron acceptor for the enzyme in this species is believed to be plastoquinone. Couples the redox reaction to proton translocation, and thus conserves the redox energy in a proton gradient. In Hordeum vulgare (Barley), this protein is NAD(P)H-quinone oxidoreductase subunit H, chloroplastic.